Here is a 200-residue protein sequence, read N- to C-terminus: Holliday junction branch migration complex subunit RuvA (200 aa).

The domain I stretch occupies residues 1–63 (MYAYVKGKLT…EDAQLLYGFS (63 aa)). The tract at residues 64-142 (SEEEKDMFLS…ITEEDSDSLL (79 aa)) is domain II. The tract at residues 143-149 (QVDATST) is flexible linker. The domain III stretch occupies residues 150-200 (EQDQFVQEAMLALEALGYSKRELAKVEKTLNKNKYDSVDEAVKAGLQLVVS).

This sequence belongs to the RuvA family. In terms of assembly, homotetramer. Forms an RuvA(8)-RuvB(12)-Holliday junction (HJ) complex. HJ DNA is sandwiched between 2 RuvA tetramers; dsDNA enters through RuvA and exits via RuvB. An RuvB hexamer assembles on each DNA strand where it exits the tetramer. Each RuvB hexamer is contacted by two RuvA subunits (via domain III) on 2 adjacent RuvB subunits; this complex drives branch migration. In the full resolvosome a probable DNA-RuvA(4)-RuvB(12)-RuvC(2) complex forms which resolves the HJ.

The protein localises to the cytoplasm. In terms of biological role, the RuvA-RuvB-RuvC complex processes Holliday junction (HJ) DNA during genetic recombination and DNA repair, while the RuvA-RuvB complex plays an important role in the rescue of blocked DNA replication forks via replication fork reversal (RFR). RuvA specifically binds to HJ cruciform DNA, conferring on it an open structure. The RuvB hexamer acts as an ATP-dependent pump, pulling dsDNA into and through the RuvAB complex. HJ branch migration allows RuvC to scan DNA until it finds its consensus sequence, where it cleaves and resolves the cruciform DNA. This is Holliday junction branch migration complex subunit RuvA from Staphylococcus aureus (strain MRSA252).